Reading from the N-terminus, the 456-residue chain is Chordin-like protein 1 (456 aa).

The signal sequence occupies residues 1–28; it reads MRRKWRSEDFHFVFFGVLCLLLIDRGKL. VWFC domains are found at residues 36–101, 115–181, and 262–327; these read TYCV…PRCP, KSCE…PVCR, and RVCV…KVCP. Asn120 is a glycosylation site (N-linked (GlcNAc...) asparagine). Positions 181-183 match the Cell attachment site motif; it reads RGD. An N-linked (GlcNAc...) asparagine glycan is attached at Asn295.

As to expression, mainly expressed in the ventral retina.

The protein localises to the secreted. In terms of biological role, seems to antagonize the function of BMP4 by binding to it and preventing its interaction with receptors. This chain is Chordin-like protein 1 (CHRDL1), found in Gallus gallus (Chicken).